The primary structure comprises 111 residues: Large ribosomal subunit protein P2 (111 aa).

A compositionally biased stretch (low complexity) spans 63–84 (ASMPTGGAPAAAAGGAATAPAA). The tract at residues 63-111 (ASMPTGGAPAAAAGGAATAPAAEAKEAKKEEKKEESEEEDEDMGFGLFD) is disordered. The segment covering 85 to 97 (EAKEAKKEEKKEE) has biased composition (basic and acidic residues). A Phosphoserine modification is found at S98.

Part of the ribosomal stalk of the large ribosomal subunit; P1 and P2 exist as dimers which assemble on the P0 scaffold.

In terms of biological role, plays an important role in the elongation step of protein synthesis. The chain is Large ribosomal subunit protein P2 from Artemia salina (Brine shrimp).